The sequence spans 209 residues: Large ribosomal subunit protein uL3 (209 aa).

Residues 128 to 166 (FGGGSRTHGQSDRLRAPGSVGGSSDPSRTFKGTRMAGRM) form a disordered region.

It belongs to the universal ribosomal protein uL3 family. Part of the 50S ribosomal subunit. Forms a cluster with proteins L14 and L19.

Functionally, one of the primary rRNA binding proteins, it binds directly near the 3'-end of the 23S rRNA, where it nucleates assembly of the 50S subunit. The protein is Large ribosomal subunit protein uL3 of Chlorobaculum parvum (strain DSM 263 / NCIMB 8327) (Chlorobium vibrioforme subsp. thiosulfatophilum).